The following is a 380-amino-acid chain: MSKRDFYEVLGVAKNASDDDIKKAYRKLAMKYHPDRNQGDAAREAEEKFKEAKEAYEMLSDSNKRAAYDQYGHAGVDPNRGMGGGAEGFGGFAEAFGDIFGDMFNQGGGRRGGAGGGRQVYRGNDLSYAMEITLEEAAHGKDAQIRIPSWDGCDTCHGSGAKPGTSAKTCTTCNGMGSVQMRQGFFSVQQTCPHCRGTGKIIPEPCTSCGGQGKVKRQKTLEVKIPAGIDDGMRIRSSGNGEPGTNGGPAGDLYIEIRIKDHDIFERDGDDLHCNVPVSFITAALGGEIEVPTLSGKAAIDIPEGTQAGKQFRLRGKGIKGVRSSYPGDLYCHIVVETPVKLTEYQRKLLRELEESLKKGGAKHSPSGESWTDRLKSFFS.

A J domain is found at 5–72 (DFYEVLGVAK…NKRAAYDQYG (68 aa)). Residues 140–218 (GKDAQIRIPS…CGGQGKVKRQ (79 aa)) form a CR-type zinc finger. Positions 153, 156, 170, 173, 192, 195, 206, and 209 each coordinate Zn(2+). 4 CXXCXGXG motif repeats span residues 153–160 (CDTCHGSG), 170–177 (CTTCNGMG), 192–199 (CPHCRGTG), and 206–213 (CTSCGGQG). A disordered region spans residues 359–380 (KGGAKHSPSGESWTDRLKSFFS). Residues 371 to 380 (WTDRLKSFFS) are compositionally biased toward basic and acidic residues.

It belongs to the DnaJ family. As to quaternary structure, homodimer. Requires Zn(2+) as cofactor.

The protein localises to the cytoplasm. In terms of biological role, participates actively in the response to hyperosmotic and heat shock by preventing the aggregation of stress-denatured proteins and by disaggregating proteins, also in an autonomous, DnaK-independent fashion. Unfolded proteins bind initially to DnaJ; upon interaction with the DnaJ-bound protein, DnaK hydrolyzes its bound ATP, resulting in the formation of a stable complex. GrpE releases ADP from DnaK; ATP binding to DnaK triggers the release of the substrate protein, thus completing the reaction cycle. Several rounds of ATP-dependent interactions between DnaJ, DnaK and GrpE are required for fully efficient folding. Also involved, together with DnaK and GrpE, in the DNA replication of plasmids through activation of initiation proteins. This chain is Chaperone protein DnaJ, found in Delftia acidovorans (strain DSM 14801 / SPH-1).